The primary structure comprises 253 residues: Vitamin B12 import ATP-binding protein BtuD (253 aa).

Residues 3–237 (LDAKNLAMPP…EQLESTFATQ (235 aa)) enclose the ABC transporter domain. Position 31–38 (31–38 (GPNGSGKS)) interacts with ATP.

It belongs to the ABC transporter superfamily. Vitamin B12 importer (TC 3.A.1.13.1) family. As to quaternary structure, the complex is composed of two ATP-binding proteins (BtuD), two transmembrane proteins (BtuC) and a solute-binding protein (BtuF).

It localises to the cell inner membrane. It catalyses the reaction an R-cob(III)alamin(out) + ATP + H2O = an R-cob(III)alamin(in) + ADP + phosphate + H(+). In terms of biological role, part of the ABC transporter complex BtuCDF involved in vitamin B12 import. Responsible for energy coupling to the transport system. This chain is Vitamin B12 import ATP-binding protein BtuD, found in Photobacterium profundum (strain SS9).